We begin with the raw amino-acid sequence, 959 residues long: Lon protease homolog, mitochondrial (959 aa).

Residues 1-67 constitute a mitochondrion transit peptide; it reads MAASTGYVRL…GPAIGGQWRG (67 aa). Disordered regions lie at residues 77-102 and 218-257; these read GAFS…GSAG and RQLE…HPAE. Over residues 91–102 the composition is skewed to gly residues; the sequence is EEGAGGAGGSAG. The region spanning 124-370 is the Lon N-terminal domain; sequence LPLIAITRNP…KALSLLKKEF (247 aa). Basic residues predominate over residues 233-243; the sequence is HKPRRKSKRGK. Residues 244–256 are compositionally biased toward basic and acidic residues; sequence KEAEDELSARHPA. 523 to 530 provides a ligand contact to ATP; that stretch reads GPPGVGKT. The Lon proteolytic domain maps to 759–949; sequence VTPPGVVMGL…REIFDIAFPD (191 aa). Catalysis depends on residues Ser-855 and Lys-898.

The protein belongs to the peptidase S16 family. In terms of assembly, homohexamer. Organized in a ring with a central cavity. The ATP-binding and proteolytic domains (AP-domain) form a hexameric chamber, while the N-terminal domain is arranged as a trimer of dimers. DNA and RNA binding is stimulated by substrate and inhibited by ATP binding. Interacts with TWNK and mitochondrial DNA polymerase subunit POLG. In terms of tissue distribution, duodenum, heart, lung and liver, but not thymus.

It localises to the mitochondrion matrix. It catalyses the reaction Hydrolysis of proteins in presence of ATP.. Its activity is regulated as follows. Peptidase activity is subject to substrate inhibition by ATP. Functionally, ATP-dependent serine protease that mediates the selective degradation of misfolded, unassembled or oxidatively damaged polypeptides as well as certain short-lived regulatory proteins in the mitochondrial matrix. Endogenous substrates include mitochondrial steroidogenic acute regulatory (StAR) protein, DELE1, helicase Twinkle (TWNK) and the large ribosomal subunit protein MRPL32/bL32m. MRPL32/bL32m is protected from degradation by LONP1 when it is bound to a nucleic acid (RNA), but TWNK is not. May also have a chaperone function in the assembly of inner membrane protein complexes. Participates in the regulation of mitochondrial gene expression and in the maintenance of the integrity of the mitochondrial genome. Binds to mitochondrial promoters and RNA in a single-stranded, site-specific, and strand-specific manner. May regulate mitochondrial DNA replication and/or gene expression using site-specific, single-stranded DNA binding to target the degradation of regulatory proteins binding to adjacent sites in mitochondrial promoters. This Homo sapiens (Human) protein is Lon protease homolog, mitochondrial.